Consider the following 203-residue polypeptide: Glycerol-3-phosphate acyltransferase (203 aa).

The next 6 helical transmembrane spans lie at 1–21, 52–72, 73–93, 115–135, 140–160, and 161–181; these read MPAW…GSIP, VGKG…AAAV, ALGS…GAVI, ILLA…LLGI, IVSF…WALG, and QPLP…AAHR.

It belongs to the PlsY family. In terms of assembly, probably interacts with PlsX.

The protein localises to the cell inner membrane. It carries out the reaction an acyl phosphate + sn-glycerol 3-phosphate = a 1-acyl-sn-glycero-3-phosphate + phosphate. It participates in lipid metabolism; phospholipid metabolism. Catalyzes the transfer of an acyl group from acyl-phosphate (acyl-PO(4)) to glycerol-3-phosphate (G3P) to form lysophosphatidic acid (LPA). This enzyme utilizes acyl-phosphate as fatty acyl donor, but not acyl-CoA or acyl-ACP. The polypeptide is Glycerol-3-phosphate acyltransferase (Synechococcus sp. (strain JA-3-3Ab) (Cyanobacteria bacterium Yellowstone A-Prime)).